Consider the following 730-residue polypeptide: Elongation factor 2 (730 aa).

The tr-type G domain maps to 19–228; sequence QRIRNIGIVA…TGVSFKDVYD (210 aa). GTP contacts are provided by residues 28–35, 94–98, and 148–151; these read AHIDHGKT, DTPGH, and NKVD. Diphthamide is present on histidine 596.

The protein belongs to the TRAFAC class translation factor GTPase superfamily. Classic translation factor GTPase family. EF-G/EF-2 subfamily.

It localises to the cytoplasm. Its function is as follows. Catalyzes the GTP-dependent ribosomal translocation step during translation elongation. During this step, the ribosome changes from the pre-translocational (PRE) to the post-translocational (POST) state as the newly formed A-site-bound peptidyl-tRNA and P-site-bound deacylated tRNA move to the P and E sites, respectively. Catalyzes the coordinated movement of the two tRNA molecules, the mRNA and conformational changes in the ribosome. The polypeptide is Elongation factor 2 (Methanosarcina acetivorans (strain ATCC 35395 / DSM 2834 / JCM 12185 / C2A)).